The primary structure comprises 172 residues: L-2,4-diaminobutyric acid acetyltransferase (172 aa).

The N-acetyltransferase domain maps to 15–166 (IVFDKPTVED…DEHEEELTFR (152 aa)).

Belongs to the acetyltransferase family. EctA subfamily.

The enzyme catalyses L-2,4-diaminobutanoate + acetyl-CoA = (2S)-4-acetamido-2-aminobutanoate + CoA + H(+). It functions in the pathway amine and polyamine biosynthesis; ectoine biosynthesis; L-ectoine from L-aspartate 4-semialdehyde: step 2/3. Functionally, catalyzes the acetylation of L-2,4-diaminobutyrate (DABA) to gamma-N-acetyl-alpha,gamma-diaminobutyric acid (ADABA) with acetyl coenzyme A. This chain is L-2,4-diaminobutyric acid acetyltransferase (ectA), found in Marinococcus halophilus.